The following is a 267-amino-acid chain: FCS-Like Zinc finger 8 (267 aa).

Disordered stretches follow at residues 1–29 and 124–156; these read MLKK…KTTP and DSPI…GSPR. Composition is skewed to polar residues over residues 15 to 28 and 126 to 141; these read ETNQ…SKTT and PISS…NSQP. The segment at 221–265 adopts an FLZ-type zinc-finger fold; sequence SFLSCCCNCKKSLGPRDDIFMYRGDRAFCSSECRSIEMMMSEEND.

This sequence belongs to the FLZ family. As to quaternary structure, interacts with KIN10 and KIN11 via its FLZ-type zinc finger domain. Interacts with KINB1, KINB2, KINB3 and SNF4 via its N-terminal part. Interacts with HB21/ZHD3.

Its function is as follows. May act as an adapter to facilitate the interaction of SnRK1 complex with effector proteins, conferring tissue- and stimulus-type specific differences in the SnRK1 regulation pathway. In Arabidopsis thaliana (Mouse-ear cress), this protein is FCS-Like Zinc finger 8.